The primary structure comprises 321 residues: Cytochrome c biogenesis protein CcsA (321 aa).

A run of 8 helical transmembrane segments spans residues V17 to L37, M46 to L63, L71 to F91, L98 to L118, M143 to I163, I225 to N245, T259 to H273, and A286 to L306.

This sequence belongs to the CcmF/CycK/Ccl1/NrfE/CcsA family. May interact with Ccs1.

The protein resides in the plastid. It is found in the chloroplast thylakoid membrane. In terms of biological role, required during biogenesis of c-type cytochromes (cytochrome c6 and cytochrome f) at the step of heme attachment. The protein is Cytochrome c biogenesis protein CcsA of Morus indica (Mulberry).